The sequence spans 176 residues: RNA pyrophosphohydrolase (176 aa).

The 144-residue stretch at 6-149 folds into the Nudix hydrolase domain; that stretch reads GYRPNVGIII…KRNVYEMALT (144 aa). A Nudix box motif is present at residues 38-59; the sequence is GGIKPGESPEAAMYRELMEEVG.

It belongs to the Nudix hydrolase family. RppH subfamily. A divalent metal cation is required as a cofactor.

In terms of biological role, accelerates the degradation of transcripts by removing pyrophosphate from the 5'-end of triphosphorylated RNA, leading to a more labile monophosphorylated state that can stimulate subsequent ribonuclease cleavage. This Laribacter hongkongensis (strain HLHK9) protein is RNA pyrophosphohydrolase.